The primary structure comprises 252 residues: 5-oxoprolinase subunit A (252 aa).

This sequence belongs to the LamB/PxpA family. In terms of assembly, forms a complex composed of PxpA, PxpB and PxpC.

The catalysed reaction is 5-oxo-L-proline + ATP + 2 H2O = L-glutamate + ADP + phosphate + H(+). Its function is as follows. Catalyzes the cleavage of 5-oxoproline to form L-glutamate coupled to the hydrolysis of ATP to ADP and inorganic phosphate. This chain is 5-oxoprolinase subunit A, found in Bordetella pertussis (strain Tohama I / ATCC BAA-589 / NCTC 13251).